Reading from the N-terminus, the 120-residue chain is Peptidyl-tRNA hydrolase (120 aa).

It belongs to the PTH2 family.

The protein localises to the cytoplasm. The catalysed reaction is an N-acyl-L-alpha-aminoacyl-tRNA + H2O = an N-acyl-L-amino acid + a tRNA + H(+). Functionally, the natural substrate for this enzyme may be peptidyl-tRNAs which drop off the ribosome during protein synthesis. The polypeptide is Peptidyl-tRNA hydrolase (Pyrobaculum aerophilum (strain ATCC 51768 / DSM 7523 / JCM 9630 / CIP 104966 / NBRC 100827 / IM2)).